We begin with the raw amino-acid sequence, 646 residues long: MISLTPSLFLNKTVVPGCSTRLSLRQPRTIITPPASLRVFSSLGSNQDPTGSVLIETTATSSSSLETSAADIVPKSTVSGGVQDVYGEDAATEDMPITPWSLSVASGYTLLRDPHHNKGLAFSHRERDAHYLRGLLPPTVISQDLQVKKIMHTLRQYQVPLQKYMAMMDLQETNERLFYKLLIDHVEELLPVIYTPTVGEACQKYGSIFLRPQGLFISLKEKGKIHEVLRNWPEKNIQVIVVTDGERILGLGDLGCQGMGIPVGKLSLYTALGGVRPSACLPVTIDVGTNNEKLLNDEFYIGLRQRRATGEEYSELMHEFMTAVKQNYGEKVVIQFEDFANHNAFDLLAKYGTTHLVFNDDIQGTASVVLAGLIAALRFVGGSLSDHRFLFLGAGEAGTGIAELIALEISKKSHIPLEEARKNIWLVDSKGLIVSSRKESIQHFKKPWAHDHEPIRELVDAVKAIKPTVLIGTSGVGQTFTQDVVETMAKLNEKPIILSLSNPTSQSECTAEEAYTWSQGRAIFASGSPFAPVEYEGKTFVPGQANNAYIFPGFGLGLIMSGTIRVHDDMLLAASEALAEELMEEHYEKGMIYPPFRNIRKISARIAAKVAAKAYELGLATRLPQPKELEQCAESSMYSPSYRSYR.

The transit peptide at 1–74 directs the protein to the chloroplast; the sequence is MISLTPSLFL…LETSAADIVP (74 aa). Residue Tyr-194 is the Proton donor of the active site. Arg-247 provides a ligand contact to NADP(+). Lys-265 serves as the catalytic Proton acceptor. The a divalent metal cation site is built by Glu-337, Asp-338, and Asp-361. NADP(+) is bound by residues Asp-361, 390 to 406, and Asn-502; that span reads LFLGAGEAGTGIAELIA.

Belongs to the malic enzymes family. As to quaternary structure, homodimer and homotetramer. The cofactor is Mg(2+). Mn(2+) is required as a cofactor. As to expression, expressed in leaves, stems, flowers and roots, mainly in vascular system. In roots, present in the stele, including the vascular tissue and the pericycle, mainly at emerging lateral roots and at root tips.

The protein localises to the plastid. It is found in the chloroplast. The catalysed reaction is (S)-malate + NADP(+) = pyruvate + CO2 + NADPH. It catalyses the reaction oxaloacetate + H(+) = pyruvate + CO2. Its pathway is photosynthesis; C3 acid pathway. The chloroplastic ME isoform decarboxylates malate shuttled from neighboring mesophyll cells. The CO(2) released is then refixed by ribulose-bisphosphate carboxylase. This pathway eliminates the photorespiratory loss of CO(2) that occurs in most plants. This chain is NADP-dependent malic enzyme 4, chloroplastic (NADP-ME4), found in Arabidopsis thaliana (Mouse-ear cress).